The primary structure comprises 83 residues: Exodeoxyribonuclease 7 small subunit (83 aa).

The protein belongs to the XseB family. In terms of assembly, heterooligomer composed of large and small subunits.

The protein resides in the cytoplasm. The enzyme catalyses Exonucleolytic cleavage in either 5'- to 3'- or 3'- to 5'-direction to yield nucleoside 5'-phosphates.. In terms of biological role, bidirectionally degrades single-stranded DNA into large acid-insoluble oligonucleotides, which are then degraded further into small acid-soluble oligonucleotides. The polypeptide is Exodeoxyribonuclease 7 small subunit (Rhizobium etli (strain ATCC 51251 / DSM 11541 / JCM 21823 / NBRC 15573 / CFN 42)).